Here is a 277-residue protein sequence, read N- to C-terminus: Basic leucine zipper transcriptional factor ATF-like 2 (277 aa).

Disordered regions lie at residues 15–50, 126–146, and 191–256; these read LGES…HQQH, FQTP…CSHE, and SFSK…QKSS. Positions 18-81 constitute a bZIP domain; that stretch reads SQKQLKKKQK…AGWGRTLHLH (64 aa). Positions 20–42 are basic motif; it reads KQLKKKQKNRVAAQRSRQKHTSK. The span at 41–50 shows a compositional bias: basic and acidic residues; it reads SKADALHQQH. The segment at 46-67 is leucine-zipper; that stretch reads LHQQHESLEKQNHALRKEIQAL. 2 stretches are compositionally biased toward polar residues: residues 213-227 and 247-256; these read RQEQ…SSDS and GSSTHWQKSS.

This sequence belongs to the bZIP family. As to quaternary structure, heterodimer; heterodimerizes with JUN family proteins.

The protein resides in the nucleus. In terms of biological role, AP-1 family transcription factor that controls the differentiation of lineage-specific cells in the immune system. Selectively suppresses CCN1 transcription and hence blocks the downstream cell proliferation signals produced by CCN1 and inhibits CCN1-induced anchorage-independent growth and invasion in several cancer types. Possibly acts by interfering with AP-1 binding to CCN1 promoter. Following infection, participates in the differentiation of CD8(+) thymic conventional dendritic cells in the immune system. Acts via the formation of a heterodimer with JUN family proteins that recognizes and binds DNA sequence 5'-TGA[CG]TCA-3' and regulates expression of target genes. The protein is Basic leucine zipper transcriptional factor ATF-like 2 (Batf2) of Mus musculus (Mouse).